The following is a 751-amino-acid chain: E3 ubiquitin-protein ligase SMURF2 (751 aa).

Positions 1-119 (MSNQGSRRNG…TGYQRLDLCK (119 aa)) constitute a C2 domain. A WW 1 domain is found at 157 to 190 (NDLPDGWEERRTASGRIQYLNHITRTTQWERPTR). Positions 214 to 226 (GTNGASCGQTSDP) are enriched in polar residues. The interval 214–236 (GTNGASCGQTSDPRISERRVRSQ) is disordered. 2 consecutive WW domains span residues 251-284 (PDLP…DPRV) and 297-330 (GPLP…DPRL). An HECT domain is found at 417-751 (RPKDLWKRLM…IEETCGFAVE (335 aa)). C719 (glycyl thioester intermediate) is an active-site residue.

The protein resides in the nucleus. Its subcellular location is the cytoplasm. The protein localises to the cell membrane. It is found in the membrane raft. The enzyme catalyses S-ubiquitinyl-[E2 ubiquitin-conjugating enzyme]-L-cysteine + [acceptor protein]-L-lysine = [E2 ubiquitin-conjugating enzyme]-L-cysteine + N(6)-ubiquitinyl-[acceptor protein]-L-lysine.. It functions in the pathway protein modification; protein ubiquitination. E3 ubiquitin-protein ligase which accepts ubiquitin from an E2 ubiquitin-conjugating enzyme in the form of a thioester and then directly transfers the ubiquitin to targeted substrates. This is E3 ubiquitin-protein ligase SMURF2 (smurf2) from Xenopus laevis (African clawed frog).